The primary structure comprises 940 residues: Valine--tRNA ligase (940 aa).

The 'HIGH' region motif lies at Pro47–His57. Positions Lys564–Ser568 match the 'KMSKS' region motif. Lys567 lines the ATP pocket. Residues Pro872–Ser938 are a coiled coil.

Belongs to the class-I aminoacyl-tRNA synthetase family. ValS type 1 subfamily. In terms of assembly, monomer.

It is found in the cytoplasm. The enzyme catalyses tRNA(Val) + L-valine + ATP = L-valyl-tRNA(Val) + AMP + diphosphate. Catalyzes the attachment of valine to tRNA(Val). As ValRS can inadvertently accommodate and process structurally similar amino acids such as threonine, to avoid such errors, it has a 'posttransfer' editing activity that hydrolyzes mischarged Thr-tRNA(Val) in a tRNA-dependent manner. The protein is Valine--tRNA ligase of Chlamydia caviae (strain ATCC VR-813 / DSM 19441 / 03DC25 / GPIC) (Chlamydophila caviae).